A 521-amino-acid chain; its full sequence is Protein NRT1/ PTR FAMILY 5.5 (521 aa).

A run of 12 helical transmembrane segments spans residues 3–23 (VLSW…LYLT), 35–55 (AIVN…QFLV), 62–82 (FWML…LAIS), 96–116 (FYVA…SLGV), 134–154 (LVSF…AAIA), 165–185 (FTIP…GACS), 279–299 (VPLF…NTFF), 310–327 (FGSW…SEAA), 356–376 (PYGI…AAHV), 394–414 (VPMS…ITGI), 440–460 (VGVC…VGSV), and 478–498 (YYWV…IVTY).

The protein belongs to the major facilitator superfamily. Proton-dependent oligopeptide transporter (POT/PTR) (TC 2.A.17) family. In terms of tissue distribution, expressed in roots.

It localises to the membrane. The chain is Protein NRT1/ PTR FAMILY 5.5 (NPF5.5) from Arabidopsis thaliana (Mouse-ear cress).